Reading from the N-terminus, the 671-residue chain is cGMP-dependent protein kinase 1 (671 aa).

Position 2 is an N-acetylserine (Ser-2). A coiled-coil region spans residues 2–59 (SELEEDFAKILMLKEERIKELEKRLSEKEEEIQELKRKLHKCQSVLPVPSTHIGPRTT). Residues 2–102 (SELEEDFAKI…LIKEAILDND (101 aa)) are required for dimerization. Positions 9 to 44 (AKILMLKEERIKELEKRLSEKEEEIQELKRKLHKCQ) are leucine-zipper. The tract at residues 50–75 (PSTHIGPRTTRAQGISAEPQTYRSFH) is autoinhibitory domain. Residue Thr-59 is modified to Phosphothreonine; by autocatalysis. The interval 103–220 (FMKNLELSQI…EYMEFLKSVP (118 aa)) is cGMP-binding, high affinity. 3',5'-cyclic GMP contacts are provided by residues 167–170 (GELA), 177–178 (RT), Arg-282, 291–294 (GEKA), 301–302 (RT), and Tyr-336. The interval 221-341 (TFQSLPEEIL…SNKAYEDAEA (121 aa)) is cGMP-binding, low affinity. The Protein kinase domain maps to 360–619 (FNIIDTLGVG…VKDIQKHKWF (260 aa)). ATP-binding positions include 366 to 374 (LGVGGFGRV) and Lys-390. Asp-484 functions as the Proton acceptor in the catalytic mechanism. The residue at position 515 (Thr-515) is a Phosphothreonine. An AGC-kinase C-terminal domain is found at 620–671 (EGFNWEGLRKGTLTPPIIPSVASPTDTSNFDGFPEDNDEPPPDDNSGWDIDF). The interval 635 to 671 (PIIPSVASPTDTSNFDGFPEDNDEPPPDDNSGWDIDF) is disordered. Positions 652-661 (FPEDNDEPPP) are enriched in acidic residues.

Belongs to the protein kinase superfamily. AGC Ser/Thr protein kinase family. cGMP subfamily. As to quaternary structure, isoform alpha: parallel homodimer or heterodimer and also heterotetramer. Interacts directly with PPP1R12A. Non-covalent dimer of dimer of PRKG1-PRKG1 and PPP1R12A-PPP1R12A. This interaction targets PRKG1 to stress fibers to mediate smooth muscle cell relaxation and vasodilation in responses to rises in cGMP. Isoform beta: antiparallel homodimer. Part of cGMP kinase signaling complex at least composed of ACTA2/alpha-actin, CNN1/calponin H1, PLN/phospholamban, PRKG1 and ITPR1. Interacts with IRAG1. Forms a stable complex with ITPR1, IRAG1, and isoform beta of PRKG1. Interacts with TRPC7 (via ankyrin repeat domain). Isoform alpha interacts with RGS2. Interacts with GTF2I. Autophosphorylation increases kinase activity. Post-translationally, 65 kDa monomer is produced by proteolytic cleavage.

The protein localises to the cytoplasm. The enzyme catalyses L-seryl-[protein] + ATP = O-phospho-L-seryl-[protein] + ADP + H(+). It carries out the reaction L-threonyl-[protein] + ATP = O-phospho-L-threonyl-[protein] + ADP + H(+). In the absence of cGMP, PRKG1 activity is suppressed by autoinhibitory contacts. Its function is as follows. Serine/threonine protein kinase that acts as a key mediator of the nitric oxide (NO)/cGMP signaling pathway. GMP binding activates PRKG1, which phosphorylates serines and threonines on many cellular proteins. Numerous protein targets for PRKG1 phosphorylation are implicated in modulating cellular calcium, but the contribution of each of these targets may vary substantially among cell types. Proteins that are phosphorylated by PRKG1 regulate platelet activation and adhesion, smooth muscle contraction, cardiac function, gene expression, feedback of the NO-signaling pathway, and other processes involved in several aspects of the CNS like axon guidance, hippocampal and cerebellar learning, circadian rhythm and nociception. Smooth muscle relaxation is mediated through lowering of intracellular free calcium, by desensitization of contractile proteins to calcium, and by decrease in the contractile state of smooth muscle or in platelet activation. Regulates intracellular calcium levels via several pathways: phosphorylates IRAG1 and inhibits IP3-induced Ca(2+) release from intracellular stores, phosphorylation of KCNMA1 (BKCa) channels decreases intracellular Ca(2+) levels, which leads to increased opening of this channel. PRKG1 phosphorylates the canonical transient receptor potential channel (TRPC) family which inactivates the associated inward calcium current. Another mode of action of NO/cGMP/PKGI signaling involves PKGI-mediated inactivation of the Ras homolog gene family member A (RhoA). Phosphorylation of RHOA by PRKG1 blocks the action of this protein in myriad processes: regulation of RHOA translocation; decreasing contraction; controlling vesicle trafficking, reduction of myosin light chain phosphorylation resulting in vasorelaxation. Activation of PRKG1 by NO signaling also alters gene expression in a number of tissues. In smooth muscle cells, increased cGMP and PRKG1 activity influence expression of smooth muscle-specific contractile proteins, levels of proteins in the NO/cGMP signaling pathway, down-regulation of the matrix proteins osteopontin and thrombospondin-1 to limit smooth muscle cell migration and phenotype. Regulates vasodilator-stimulated phosphoprotein (VASP) functions in platelets and smooth muscle. The chain is cGMP-dependent protein kinase 1 (PRKG1) from Oryctolagus cuniculus (Rabbit).